Reading from the N-terminus, the 362-residue chain is EARP-interacting protein 1 (362 aa).

WD repeat units follow at residues 61–108 (HPAG…RTLE), 206–246 (AHIH…SALT), 250–290 (PHAH…SEQQ), and 319–359 (EHED…KYAL).

This sequence belongs to the WD repeat EIPR1 family. In terms of tissue distribution, expressed in the hypodermis and the pharynx.

It is found in the cytoplasm. Plays a role in the trafficking of cargo to dense-core vesicles, probably through association with the endosome-associated recycling protein (EARP) complex. Important for neuronal function. The polypeptide is EARP-interacting protein 1 (Caenorhabditis elegans).